The sequence spans 126 residues: Aspartate 1-decarboxylase (126 aa).

Ser-25 (schiff-base intermediate with substrate; via pyruvic acid) is an active-site residue. A Pyruvic acid (Ser) modification is found at Ser-25. Thr-57 provides a ligand contact to substrate. The active-site Proton donor is Tyr-58. 73-75 (GAA) is a binding site for substrate.

This sequence belongs to the PanD family. In terms of assembly, heterooctamer of four alpha and four beta subunits. Pyruvate serves as cofactor. Is synthesized initially as an inactive proenzyme, which is activated by self-cleavage at a specific serine bond to produce a beta-subunit with a hydroxyl group at its C-terminus and an alpha-subunit with a pyruvoyl group at its N-terminus.

It localises to the cytoplasm. The enzyme catalyses L-aspartate + H(+) = beta-alanine + CO2. It functions in the pathway cofactor biosynthesis; (R)-pantothenate biosynthesis; beta-alanine from L-aspartate: step 1/1. Its function is as follows. Catalyzes the pyruvoyl-dependent decarboxylation of aspartate to produce beta-alanine. The chain is Aspartate 1-decarboxylase from Cronobacter sakazakii (strain ATCC BAA-894) (Enterobacter sakazakii).